The primary structure comprises 166 residues: Dynein regulatory complex protein 8 (166 aa).

Positions 95 to 130 (DDYHTLLRAFRAFDPDGRGFIDAESFKSLLTGKGEA) constitute an EF-hand domain.

This sequence belongs to the DRC8 family. Component of the nexin-dynein regulatory complex (N-DRC).

The protein localises to the cytoplasm. Its subcellular location is the cytoskeleton. It localises to the flagellum axoneme. In terms of biological role, component of the nexin-dynein regulatory complex (N-DRC), a key regulator of ciliary/flagellar motility which maintains the alignment and integrity of the distal axoneme and regulates microtubule sliding in motile axonemes. This is Dynein regulatory complex protein 8 from Chlamydomonas reinhardtii (Chlamydomonas smithii).